The chain runs to 119 residues: Transcription and mRNA export factor SUS1 (119 aa).

This sequence belongs to the ENY2 family. In terms of assembly, component of the nuclear pore complex (NPC)-associated TREX-2 complex (transcription and export complex 2), composed of at least SUS1, SAC3, THP1, SEM1, and CDC31. TREX-2 contains 2 SUS1 chains. The TREX-2 complex interacts with the nucleoporin NUP1. Component of the 1.8 MDa SAGA transcription coactivator-HAT complex. SAGA is built of 5 distinct domains with specialized functions. Within the SAGA complex, SUS1, SGF11, SGF73 and UBP8 form an additional subcomplex of SAGA called the DUB module (deubiquitination module). Interacts directly with THP1, SAC3, SGF11, and with the RNA polymerase II.

The protein resides in the nucleus. It localises to the nucleoplasm. Its subcellular location is the cytoplasm. It is found in the P-body. Its function is as follows. Involved in mRNA export coupled transcription activation by association with both the TREX-2 and the SAGA complexes. At the promoters, SAGA is required for recruitment of the basal transcription machinery. It influences RNA polymerase II transcriptional activity through different activities such as TBP interaction and promoter selectivity, interaction with transcription activators, and chromatin modification through histone acetylation and deubiquitination. Within the SAGA complex, participates in a subcomplex required for deubiquitination of H2B and for the maintenance of steady-state H3 methylation levels. The TREX-2 complex functions in docking export-competent ribonucleoprotein particles (mRNPs) to the nuclear entrance of the nuclear pore complex (nuclear basket). TREX-2 participates in mRNA export and accurate chromatin positioning in the nucleus by tethering genes to the nuclear periphery. May also be involved in cytoplasmic mRNA decay by interaction with components of P-bodies. In Candida albicans (strain SC5314 / ATCC MYA-2876) (Yeast), this protein is Transcription and mRNA export factor SUS1.